The following is a 261-amino-acid chain: MTHQTHAYHMVNPSPWPLTGALSALLMTFGLIMWFHFNSTALLMLGLTTNMLTMYQWWRDIIRESTFQGHHTPVVQKGLRYGMILFIISEVLFFTGFFWAFYHSSLAPTPELGGCWPPTGIHPLNPLEVPLLNTSVLLASGVSITWAHHSLMEGHRNHMLQALFITIALGVYFTLLQASEYYEAPFTISDGVYGSTFFVATGFHGLHVIIGSTFLIVCFFRQLKFHFTSSHHFGFEAAAWYWHFVDVVWLFLYVSIYWWGS.

The Mitochondrial matrix segment spans residues 1–15 (MTHQTHAYHMVNPSP). The chain crosses the membrane as a helical span at residues 16–34 (WPLTGALSALLMTFGLIMW). Residues 35–40 (FHFNST) are Mitochondrial intermembrane-facing. A helical membrane pass occupies residues 41 to 66 (ALLMLGLTTNMLTMYQWWRDIIREST). The Mitochondrial matrix segment spans residues 67–72 (FQGHHT). A helical membrane pass occupies residues 73-105 (PVVQKGLRYGMILFIISEVLFFTGFFWAFYHSS). At 106-128 (LAPTPELGGCWPPTGIHPLNPLE) the chain is on the mitochondrial intermembrane side. The helical transmembrane segment at 129-152 (VPLLNTSVLLASGVSITWAHHSLM) threads the bilayer. At 153 to 155 (EGH) the chain is on the mitochondrial matrix side. Residues 156-183 (RNHMLQALFITIALGVYFTLLQASEYYE) traverse the membrane as a helical segment. Residues 184–190 (APFTISD) are Mitochondrial intermembrane-facing. Residues 191–223 (GVYGSTFFVATGFHGLHVIIGSTFLIVCFFRQL) traverse the membrane as a helical segment. Residues 224–232 (KFHFTSSHH) lie on the Mitochondrial matrix side of the membrane. Residues 233 to 256 (FGFEAAAWYWHFVDVVWLFLYVSI) form a helical membrane-spanning segment. Topologically, residues 257 to 261 (YWWGS) are mitochondrial intermembrane.

Belongs to the cytochrome c oxidase subunit 3 family. In terms of assembly, component of the cytochrome c oxidase (complex IV, CIV), a multisubunit enzyme composed of 14 subunits. The complex is composed of a catalytic core of 3 subunits MT-CO1, MT-CO2 and MT-CO3, encoded in the mitochondrial DNA, and 11 supernumerary subunits COX4I, COX5A, COX5B, COX6A, COX6B, COX6C, COX7A, COX7B, COX7C, COX8 and NDUFA4, which are encoded in the nuclear genome. The complex exists as a monomer or a dimer and forms supercomplexes (SCs) in the inner mitochondrial membrane with NADH-ubiquinone oxidoreductase (complex I, CI) and ubiquinol-cytochrome c oxidoreductase (cytochrome b-c1 complex, complex III, CIII), resulting in different assemblies (supercomplex SCI(1)III(2)IV(1) and megacomplex MCI(2)III(2)IV(2)).

Its subcellular location is the mitochondrion inner membrane. The catalysed reaction is 4 Fe(II)-[cytochrome c] + O2 + 8 H(+)(in) = 4 Fe(III)-[cytochrome c] + 2 H2O + 4 H(+)(out). Its function is as follows. Component of the cytochrome c oxidase, the last enzyme in the mitochondrial electron transport chain which drives oxidative phosphorylation. The respiratory chain contains 3 multisubunit complexes succinate dehydrogenase (complex II, CII), ubiquinol-cytochrome c oxidoreductase (cytochrome b-c1 complex, complex III, CIII) and cytochrome c oxidase (complex IV, CIV), that cooperate to transfer electrons derived from NADH and succinate to molecular oxygen, creating an electrochemical gradient over the inner membrane that drives transmembrane transport and the ATP synthase. Cytochrome c oxidase is the component of the respiratory chain that catalyzes the reduction of oxygen to water. Electrons originating from reduced cytochrome c in the intermembrane space (IMS) are transferred via the dinuclear copper A center (CU(A)) of subunit 2 and heme A of subunit 1 to the active site in subunit 1, a binuclear center (BNC) formed by heme A3 and copper B (CU(B)). The BNC reduces molecular oxygen to 2 water molecules using 4 electrons from cytochrome c in the IMS and 4 protons from the mitochondrial matrix. The polypeptide is Cytochrome c oxidase subunit 3 (MT-CO3) (Tragelaphus oryx (Eland)).